The following is a 354-amino-acid chain: 3-dehydroquinate synthase (354 aa).

Residues 66 to 71, 100 to 104, 124 to 125, K137, and K146 each bind NAD(+); these read DGERYK, GVVGD, and TT. The Zn(2+) site is built by E179, H242, and H259.

This sequence belongs to the sugar phosphate cyclases superfamily. Dehydroquinate synthase family. The cofactor is Co(2+). Zn(2+) is required as a cofactor. NAD(+) serves as cofactor.

The protein localises to the cytoplasm. The catalysed reaction is 7-phospho-2-dehydro-3-deoxy-D-arabino-heptonate = 3-dehydroquinate + phosphate. Its pathway is metabolic intermediate biosynthesis; chorismate biosynthesis; chorismate from D-erythrose 4-phosphate and phosphoenolpyruvate: step 2/7. Functionally, catalyzes the conversion of 3-deoxy-D-arabino-heptulosonate 7-phosphate (DAHP) to dehydroquinate (DHQ). In Halorhodospira halophila (strain DSM 244 / SL1) (Ectothiorhodospira halophila (strain DSM 244 / SL1)), this protein is 3-dehydroquinate synthase.